A 148-amino-acid chain; its full sequence is Ribonuclease H (148 aa).

An RNase H type-1 domain is found at 3–144; the sequence is DKEQVVIYTD…ADQLANRGVA (142 aa). Mg(2+) is bound by residues aspartate 12, glutamate 50, aspartate 72, and aspartate 136. The disordered stretch occupies residues 125–148; sequence GHTGDPGNERADQLANRGVAELPR.

Belongs to the RNase H family. Monomer. It depends on Mg(2+) as a cofactor.

The protein localises to the cytoplasm. It carries out the reaction Endonucleolytic cleavage to 5'-phosphomonoester.. Endonuclease that specifically degrades the RNA of RNA-DNA hybrids. The chain is Ribonuclease H from Pseudomonas aeruginosa (strain LESB58).